A 170-amino-acid chain; its full sequence is NADPH-dependent 7-cyano-7-deazaguanine reductase (170 aa).

Cys-58 acts as the Thioimide intermediate in catalysis. The active-site Proton donor is Asp-65. Substrate contacts are provided by residues Val-80–Ser-82 and His-99–Glu-100.

The protein belongs to the GTP cyclohydrolase I family. QueF type 1 subfamily.

The protein localises to the cytoplasm. It carries out the reaction 7-aminomethyl-7-carbaguanine + 2 NADP(+) = 7-cyano-7-deazaguanine + 2 NADPH + 3 H(+). Its pathway is tRNA modification; tRNA-queuosine biosynthesis. Functionally, catalyzes the NADPH-dependent reduction of 7-cyano-7-deazaguanine (preQ0) to 7-aminomethyl-7-deazaguanine (preQ1). In Bdellovibrio bacteriovorus (strain ATCC 15356 / DSM 50701 / NCIMB 9529 / HD100), this protein is NADPH-dependent 7-cyano-7-deazaguanine reductase.